We begin with the raw amino-acid sequence, 1018 residues long: MLPSIVISIVLASFVSAESSITEAPTTTAEDNPYTIYPSVAKTASINGFADRIYDQLPECAKPCMFQNTGVTPCPYWDTGCLCIMPTFAGAIGSCIAEKCKGQDVVSATSLGTSICSVAGVWDPYWMVPANVQSSLSAAATAVASSSEQPVETSSEPAGSSQSVESSQPAETSSSEPAETSSSEPAETSSETSSEQPASSEPAETSSEESSTITSAPSTPEDNPYTIYPSVAKTASINGFADRIYDQLPECAKPCMFQNTGVTPCPYWDTGCLCIMPTFAGAIGSCIAEKCKGQDVVSATSLGTSICSVAGVWDPYWMVPANVQSSLSAAATAVPSSSEQSVETSSESAESSQSVESSQPAETSSEQPSETSSETSSQQLSSITSAPDSSATSSSSTTSTFIRTASINGFADKLYDQLPECAKPCMFQNTGITPCPYWDAGCLCVMPQFAGAIGSCVADSCKGQDIVSVTSLGTSVCSVAGVNAPYWMLPASVKSSLSVAATAVPTSDSASETASQEPSETSSEQPSETASQQPAETSSEESSTITSAPSTPEDNPYTIYPSVAKTASINGFADRIYDQLPECAKPCMFQNTGVTPCPYWDTGCLCIMPTFAGAIGSCIAEKCKGQDVVSATSLGSSICSVAGVWDPYWMLPANVQSSLNAAATAVATSDSASEVASASESASQVPQETSAASSQSANNSVASAAPSNSSVSAAPSSNSSGVPAAPSNNSSGASVVPSQSANNSSASAAPSNNSSSAISESVAPSSYGNSTIAQPSTSTKSDAASITGPITTDKVITNESGIVFTSTVIITHVSEYCDQTSAAAVQSSACEEQSSAKSEQASASSEQVKVITSVVWCESSIQSIESVKTSAEAAHKTEVIASCASELSSLSSAKSEAMKTVSSLVEVQKSAVAKQTSLAAVQSSAASVQLSAAHAQKSSEAVEVAQTAVAEASKAGDEISTEIVNITKTVSSGKETGVSQATVAANTHSVAIANMANTKFASTMSLLVASFVFVGLFI.

Residues M1 to A17 form the signal peptide. The CFEM 1 domain maps to N32–V143. Intrachain disulfides connect C60–C100, C64–C95, C74–C81, and C83–C116. D78 contributes to the heme binding site. Positions S147 to I227 are disordered. Positions E148 to V164 are enriched in polar residues. The span at E165–E221 shows a compositional bias: low complexity. CFEM domains follow at residues N223 to V334 and S393 to V504. 4 cysteine pairs are disulfide-bonded: C251-C291, C255-C286, C265-C272, and C274-C307. D269 contacts heme. The disordered stretch occupies residues S338 to S396. Disulfide bonds link C421/C461, C425/C456, C435/C442, and C444/C477. D439 lines the heme pocket. The disordered stretch occupies residues S507–Y557. A compositionally biased stretch (low complexity) spans S509–E553. The region spanning N555–V666 is the CFEM 4 domain. 4 cysteine pairs are disulfide-bonded: C583/C623, C587/C618, C597/C604, and C606/C639. D601 serves as a coordination point for heme. The interval S677–S785 is disordered. The span at S690–S766 shows a compositional bias: low complexity. N-linked (GlcNAc...) asparagine glycosylation is found at N698, N708, N718, N729, N743, N753, N769, N798, and N965. Residues Y767–S785 show a composition bias toward polar residues. The GPI-anchor amidated serine moiety is linked to residue S989. The propeptide at V990–I1018 is removed in mature form.

Belongs to the RBT5 family. Post-translationally, the GPI-anchor is attached to the protein in the endoplasmic reticulum and serves to target the protein to the cell surface. There, the glucosamine-inositol phospholipid moiety is cleaved off and the GPI-modified mannoprotein is covalently attached via its lipidless GPI glycan remnant to the 1,6-beta-glucan of the outer cell wall layer.

The protein resides in the secreted. Its subcellular location is the cell wall. The protein localises to the membrane. Its function is as follows. Heme-binding protein involved in heme-iron utilization. The ability to acquire iron from host tissues is a major virulence factor of pathogenic microorganisms. Required for biofilm formation. This chain is Cell wall protein 1 (CSA1), found in Candida albicans (strain SC5314 / ATCC MYA-2876) (Yeast).